Here is a 331-residue protein sequence, read N- to C-terminus: Neuropeptides B/W receptor type 1 (331 aa).

The Extracellular portion of the chain corresponds to 1–43 (MHNASYWGPERANTSCPAPAPTLGCPNASGPAPPLPPPLAVAV). Asn3, Asn13, and Asn27 each carry an N-linked (GlcNAc...) asparagine glycan. Residues 44 to 66 (PVVYAVICAVGLAGNSAVLFVLL) form a helical membrane-spanning segment. Residues 67–75 (RAPRRKTVT) are Cytoplasmic-facing. The chain crosses the membrane as a helical span at residues 76 to 100 (NLFILNLAVADELFTLVPPVNIADF). At 101-115 (LLRRWPFGELLCKLV) the chain is on the extracellular side. The cysteines at positions 112 and 191 are disulfide-linked. Residues 116-135 (VAVDQYNTFSSLYFLTVMSA) traverse the membrane as a helical segment. Residues 136-160 (DRYLVVLATAESRRVAGRTYGAARA) are Cytoplasmic-facing. Residues 161–180 (VSLAVWGVATLVVLPFAVFA) traverse the membrane as a helical segment. Residues 181-205 (RLDEEQGRRQCVLVFPQPEALWWRA) lie on the Extracellular side of the membrane. Residues 206 to 227 (SRLYTLVLGFAIPVSTICVLYT) form a helical membrane-spanning segment. Topologically, residues 228 to 251 (SLLCRLRAIRLDSHAKALDRAKKR) are cytoplasmic. The helical transmembrane segment at 252 to 276 (VTVLVVAILAVCLLVWTPYHLSTVV) threads the bilayer. At 277–286 (ALTTDLPQTP) the chain is on the extracellular side. A helical membrane pass occupies residues 287-301 (LVIAVSYFITSLSYA). At 302-331 (NSCLNPFLYAFLDDSFRRSLRQLLACRTTS) the chain is on the cytoplasmic side.

The protein belongs to the G-protein coupled receptor 1 family.

It localises to the cell membrane. Interacts specifically with a number of opioid ligands. Receptor for neuropeptides B and W, which may be involved in neuroendocrine system regulation, food intake and the organization of other signals. The chain is Neuropeptides B/W receptor type 1 (NPBWR1) from Bos taurus (Bovine).